The sequence spans 391 residues: Protein CapJ (391 aa).

It participates in capsule biogenesis; capsule polysaccharide biosynthesis. Its function is as follows. Required for the biosynthesis of type 1 capsular polysaccharide. The sequence is that of Protein CapJ (capJ) from Staphylococcus aureus.